The sequence spans 681 residues: Macrolide export ATP-binding/permease protein MacB (681 aa).

In terms of domain architecture, ABC transporter spans Leu6–Ala244. Gly42–Ser49 is a binding site for ATP. Positions Thr246–Ala274 are disordered. 4 helical membrane passes run Leu306–Gly326, Leu554–Met574, Leu611–Phe631, and Ala644–Met664.

It belongs to the ABC transporter superfamily. Macrolide exporter (TC 3.A.1.122) family. In terms of assembly, homodimer.

It is found in the cell inner membrane. Functionally, non-canonical ABC transporter that contains transmembrane domains (TMD), which form a pore in the inner membrane, and an ATP-binding domain (NBD), which is responsible for energy generation. Confers resistance against macrolides. The polypeptide is Macrolide export ATP-binding/permease protein MacB (Burkholderia cenocepacia (strain HI2424)).